Reading from the N-terminus, the 277-residue chain is Proteasome subunit beta type-7 (277 aa).

The propeptide at 1–43 is removed in mature form; it reads MAAVSVYAPPVGGFSFDNCRRNAVLEADFAKRGYKLPKVRKTG. Threonine 44 serves as the catalytic Nucleophile.

It belongs to the peptidase T1B family. The 26S proteasome consists of a 20S proteasome core and two 19S regulatory subunits. The 20S proteasome core is a barrel-shaped complex made of 28 subunits that are arranged in four stacked rings. The two outer rings are each formed by seven alpha subunits, and the two inner rings are formed by seven beta subunits. The proteolytic activity is exerted by three beta-subunits PSMB5, PSMB6 and PSMB7. As to quaternary structure, (Microbial infection) Interacts with HIV-1 Tat protein. In terms of tissue distribution, expressed at a low level in colonic mucosa. Up-regulated in colorectal cancer tissues.

It localises to the cytoplasm. The protein localises to the nucleus. The catalysed reaction is Cleavage of peptide bonds with very broad specificity.. Component of the 20S core proteasome complex involved in the proteolytic degradation of most intracellular proteins. This complex plays numerous essential roles within the cell by associating with different regulatory particles. Associated with two 19S regulatory particles, forms the 26S proteasome and thus participates in the ATP-dependent degradation of ubiquitinated proteins. The 26S proteasome plays a key role in the maintenance of protein homeostasis by removing misfolded or damaged proteins that could impair cellular functions, and by removing proteins whose functions are no longer required. Associated with the PA200 or PA28, the 20S proteasome mediates ubiquitin-independent protein degradation. This type of proteolysis is required in several pathways including spermatogenesis (20S-PA200 complex) or generation of a subset of MHC class I-presented antigenic peptides (20S-PA28 complex). Within the 20S core complex, PSMB7 displays a trypsin-like activity. This chain is Proteasome subunit beta type-7, found in Homo sapiens (Human).